Consider the following 481-residue polypeptide: Subtilisin-like protease 1 (481 aa).

An N-terminal signal peptide occupies residues 1-19 (MGVFRFISISLAAVSAANA). Positions 20–116 (AQILSMPHAQ…VEPDTIISVH (97 aa)) are excised as a propeptide. Residues 34 to 115 (SYIVMMKDDT…FVEPDTIISV (82 aa)) enclose the Inhibitor I9 domain. In terms of domain architecture, Peptidase S8 spans 126-400 (SWGLARISSS…NVLINNGGAK (275 aa)). Catalysis depends on charge relay system residues Asp-158 and His-190. The disordered stretch occupies residues 175–198 (GSNQVNDGDDNDRSGHGTHTSGTM). Asn-251 carries an N-linked (GlcNAc...) asparagine glycan. The interval 281 to 312 (GNDNTDARSSSPASEPSVCTVGASAEDDSRSS) is disordered. The span at 282–294 (NDNTDARSSSPAS) shows a compositional bias: polar residues. The Charge relay system role is filled by Ser-345. The interval 379–455 (ASISDVGPGT…HPHTPFPGGD (77 aa)) is disordered. Residues 424–450 (PQQPAPGEPSTPAPAPMPPTPQHPHTP) are compositionally biased toward pro residues.

The protein belongs to the peptidase S8 family.

The protein resides in the secreted. Secreted subtilisin-like serine protease with keratinolytic activity that contributes to pathogenicity. This chain is Subtilisin-like protease 1 (SUB1), found in Arthroderma gypseum (strain ATCC MYA-4604 / CBS 118893) (Microsporum gypseum).